The chain runs to 343 residues: Glyceraldehyde-3-phosphate dehydrogenase 1 (343 aa).

NAD(+) is bound by residues 13-14 (RI), Asp-35, Arg-79, and Ser-121. D-glyceraldehyde 3-phosphate is bound by residues 154–156 (SCT), Thr-185, 214–215 (TG), and Arg-237. Catalysis depends on Cys-155, which acts as the Nucleophile. Position 319 (Asn-319) interacts with NAD(+).

Belongs to the glyceraldehyde-3-phosphate dehydrogenase family. As to quaternary structure, homotetramer.

It localises to the cytoplasm. The catalysed reaction is D-glyceraldehyde 3-phosphate + phosphate + NAD(+) = (2R)-3-phospho-glyceroyl phosphate + NADH + H(+). It participates in carbohydrate degradation; glycolysis; pyruvate from D-glyceraldehyde 3-phosphate: step 1/5. Functionally, catalyzes the oxidative phosphorylation of glyceraldehyde 3-phosphate (G3P) to 1,3-bisphosphoglycerate (BPG) using the cofactor NAD. The first reaction step involves the formation of a hemiacetal intermediate between G3P and a cysteine residue, and this hemiacetal intermediate is then oxidized to a thioester, with concomitant reduction of NAD to NADH. The reduced NADH is then exchanged with the second NAD, and the thioester is attacked by a nucleophilic inorganic phosphate to produce BPG. In Trichormus variabilis (strain ATCC 29413 / PCC 7937) (Anabaena variabilis), this protein is Glyceraldehyde-3-phosphate dehydrogenase 1 (gap1).